The following is a 564-amino-acid chain: Formate--tetrahydrofolate ligase (564 aa).

Position 65 to 72 (threonine 65 to threonine 72) interacts with ATP.

It belongs to the formate--tetrahydrofolate ligase family.

It catalyses the reaction (6S)-5,6,7,8-tetrahydrofolate + formate + ATP = (6R)-10-formyltetrahydrofolate + ADP + phosphate. It participates in one-carbon metabolism; tetrahydrofolate interconversion. The chain is Formate--tetrahydrofolate ligase from Roseiflexus castenholzii (strain DSM 13941 / HLO8).